Reading from the N-terminus, the 119-residue chain is Circadian clock oscillator protein KaiB (119 aa).

It belongs to the KaiB family. As to quaternary structure, the KaiABC complex composition changes during the circadian cycle to control KaiC phosphorylation. Complexes KaiC(6), KaiA(2-4):KaiC(6), KaiB(6):KaiC(6) and KaiC(6):KaiB(6):KaiA(12) are among the most important forms, many form cooperatively. Undergoes a major conformational rearrangment; in the free state forms homotetramers as a dimer of dimers. When bound to the CI domain of KaiC switches to a monomeric thioredoxin-fold (KaiB(fs)). KaiB(fs) binds CikA, leading it to dephosphorylate phospho-RpaA.

Functionally, key component of the KaiABC oscillator complex, which constitutes the main circadian regulator in cyanobacteria. Complex composition changes during the circadian cycle to control KaiC phosphorylation. KaiA stimulates KaiC autophosphorylation, while KaiB sequesters KaiA, leading to KaiC autodephosphorylation. Phospho-Ser-431 KaiC accumulation triggers binding of KaiB to form the KaiB(6):KaiC(6) complex, leading to changes in output regulators CikA and SasA. KaiB switches to a thioredoxin-like fold (KaiB(fs)) when bound to KaiC. KaiB(6):KaiC(6) formation exposes a site for KaiA binding that sequesters KaiA from KaiC, making the KaiC(6):KaiB(6):KaiA(12) complex that results in KaiC autodephosphorylation. A metamorphic protein which reversibly switches between an inactive tetrameric fold and a rare, thioredoxin-like monomeric fold (KaiB(fs)). KaiB(fs) binds phospho-KaiC, KaiA and CikA. KaiA and CikA compete for binding to KaiB(fs), and KaiB(fs) and SasA compete for binding to KaiC, thus the clock oscillator and output signal pathway are tightly coupled. The polypeptide is Circadian clock oscillator protein KaiB (Synechococcus sp. (strain CC9311)).